The chain runs to 61 residues: MATTTEKLKNFFAELRRVLLVTKKPGWKEFKMAAKITGIGMILIGLIGLVIRMIGYLITGA.

Residues 38–58 (GIGMILIGLIGLVIRMIGYLI) form a helical membrane-spanning segment.

The protein belongs to the SecE/SEC61-gamma family. Component of the Sec protein translocase complex. Heterotrimer consisting of SecY (alpha), SecG (beta) and SecE (gamma) subunits. The heterotrimers can form oligomers, although 1 heterotrimer is thought to be able to translocate proteins. Interacts with the ribosome. May interact with SecDF, and other proteins may be involved.

The protein localises to the cell membrane. Essential subunit of the Sec protein translocation channel SecYEG. Clamps together the 2 halves of SecY. May contact the channel plug during translocation. This Thermococcus onnurineus (strain NA1) protein is Protein translocase subunit SecE.